We begin with the raw amino-acid sequence, 137 residues long: Small ribosomal subunit protein bS16m (137 aa).

Residues 1–34 (MVHLTTLLCKAYRGGHLTIRLALGGCTNRPFYRI) constitute a mitochondrion transit peptide. Thr-130 carries the phosphothreonine modification.

It belongs to the bacterial ribosomal protein bS16 family. As to quaternary structure, component of the mitochondrial ribosome small subunit (28S) which comprises a 12S rRNA and about 30 distinct proteins.

It localises to the mitochondrion. This Pongo abelii (Sumatran orangutan) protein is Small ribosomal subunit protein bS16m (MRPS16).